The following is a 269-amino-acid chain: Thiazole synthase (269 aa).

The active-site Schiff-base intermediate with DXP is K95. Residues G156, 182-183 (AG), and 204-205 (NT) contribute to the 1-deoxy-D-xylulose 5-phosphate site.

This sequence belongs to the ThiG family. In terms of assembly, homotetramer. Forms heterodimers with either ThiH or ThiS.

The protein resides in the cytoplasm. The enzyme catalyses [ThiS sulfur-carrier protein]-C-terminal-Gly-aminoethanethioate + 2-iminoacetate + 1-deoxy-D-xylulose 5-phosphate = [ThiS sulfur-carrier protein]-C-terminal Gly-Gly + 2-[(2R,5Z)-2-carboxy-4-methylthiazol-5(2H)-ylidene]ethyl phosphate + 2 H2O + H(+). It participates in cofactor biosynthesis; thiamine diphosphate biosynthesis. Its function is as follows. Catalyzes the rearrangement of 1-deoxy-D-xylulose 5-phosphate (DXP) to produce the thiazole phosphate moiety of thiamine. Sulfur is provided by the thiocarboxylate moiety of the carrier protein ThiS. In vitro, sulfur can be provided by H(2)S. This is Thiazole synthase from Shewanella frigidimarina (strain NCIMB 400).